A 163-amino-acid polypeptide reads, in one-letter code: MASTNSFDVVSDFDRQEVVNTIDQALRDINTRYDLKDTKTTIELGENTITINTASDFTLDAVQTILVTKAVKRNLSPKLFDYGEAESASGGRVRQVITLRQGISKDDAKKITKMVKTDFKKVQASIQGDAVRISSKSKDDLQAVMQAVRDLDFPMPIQFTNYR.

Belongs to the YajQ family.

Its function is as follows. Nucleotide-binding protein. This is Nucleotide-binding protein SYNPCC7002_A1983 from Picosynechococcus sp. (strain ATCC 27264 / PCC 7002 / PR-6) (Agmenellum quadruplicatum).